We begin with the raw amino-acid sequence, 435 residues long: Eukaryotic peptide chain release factor subunit 1-3 (435 aa).

A2 carries the N-acetylalanine modification.

Belongs to the eukaryotic release factor 1 family. In terms of assembly, heterodimer of two subunits, one of which binds GTP.

Its subcellular location is the cytoplasm. Its function is as follows. Directs the termination of nascent peptide synthesis (translation) in response to the termination codons UAA, UAG and UGA. Modulates plant growth and development. In Arabidopsis thaliana (Mouse-ear cress), this protein is Eukaryotic peptide chain release factor subunit 1-3 (ERF1-3).